A 39-amino-acid polypeptide reads, in one-letter code: Cytochrome b559 subunit beta (39 aa).

Residues 14 to 30 form a helical membrane-spanning segment; the sequence is WLAIHGLAVPTVFFLGS. Position 18 (His18) interacts with heme.

In terms of assembly, heterodimer of an alpha subunit and a beta subunit. PSII is composed of 1 copy each of membrane proteins PsbA, PsbB, PsbC, PsbD, PsbE, PsbF, PsbH, PsbI, PsbJ, PsbK, PsbL, PsbM, PsbT, PsbX, PsbY, PsbZ, Psb30/Ycf12, at least 3 peripheral proteins of the oxygen-evolving complex and a large number of cofactors. It forms dimeric complexes. Heme b is required as a cofactor. Post-translationally, the N-terminus is blocked.

The protein resides in the plastid. It localises to the chloroplast thylakoid membrane. This b-type cytochrome is tightly associated with the reaction center of photosystem II (PSII). PSII is a light-driven water:plastoquinone oxidoreductase that uses light energy to abstract electrons from H(2)O, generating O(2) and a proton gradient subsequently used for ATP formation. It consists of a core antenna complex that captures photons, and an electron transfer chain that converts photonic excitation into a charge separation. This Spinacia oleracea (Spinach) protein is Cytochrome b559 subunit beta.